We begin with the raw amino-acid sequence, 265 residues long: Undecaprenyl-diphosphatase (265 aa).

7 helical membrane passes run 38-58 (SDMF…IIYW), 80-100 (LIVA…LGFE), 107-127 (PIAW…WAAA), 135-155 (ITWL…VFPG), 175-195 (AAAT…ASGY), 213-233 (ALAI…KWLL), and 244-264 (FAIY…TGMI).

The protein belongs to the UppP family.

It is found in the cell inner membrane. The catalysed reaction is di-trans,octa-cis-undecaprenyl diphosphate + H2O = di-trans,octa-cis-undecaprenyl phosphate + phosphate + H(+). Its function is as follows. Catalyzes the dephosphorylation of undecaprenyl diphosphate (UPP). Confers resistance to bacitracin. This chain is Undecaprenyl-diphosphatase, found in Rhizobium etli (strain ATCC 51251 / DSM 11541 / JCM 21823 / NBRC 15573 / CFN 42).